Consider the following 137-residue polypeptide: Large ribosomal subunit protein uL16 (137 aa).

The protein belongs to the universal ribosomal protein uL16 family. In terms of assembly, part of the 50S ribosomal subunit.

Functionally, binds 23S rRNA and is also seen to make contacts with the A and possibly P site tRNAs. In Streptococcus mutans serotype c (strain ATCC 700610 / UA159), this protein is Large ribosomal subunit protein uL16.